A 156-amino-acid chain; its full sequence is Transcription elongation factor GreA (156 aa).

The stretch at 1–32 forms a coiled coil; it reads MKKVRLTREGYEKLKKELEDLKRKFMYEISER.

The protein belongs to the GreA/GreB family.

Functionally, necessary for efficient RNA polymerase transcription elongation past template-encoded arresting sites. The arresting sites in DNA have the property of trapping a certain fraction of elongating RNA polymerases that pass through, resulting in locked ternary complexes. Cleavage of the nascent transcript by cleavage factors such as GreA or GreB allows the resumption of elongation from the new 3'terminus. GreA releases sequences of 2 to 3 nucleotides. This Thermotoga sp. (strain RQ2) protein is Transcription elongation factor GreA.